The primary structure comprises 476 residues: Tubulointerstitial nephritis antigen (476 aa).

N38 carries N-linked (GlcNAc...) asparagine glycosylation. The region spanning 59-107 is the SMB domain; the sequence is RFGCCADRDDGCVTQFYEADALCYCDKFCERENSDCCPDYKSFCREEKG. Cystine bridges form between C63-C83 and C87-C94. N-linked (GlcNAc...) asparagine glycans are attached at residues N175, N314, N360, and N455.

The protein belongs to the peptidase C1 family.

Its subcellular location is the secreted. It localises to the extracellular space. The protein resides in the extracellular matrix. It is found in the basement membrane. In terms of biological role, mediates adhesion of proximal tubule epithelial cells via integrins alpha3-beta1 and alphaV-beta3. This is a non catalytic peptidase C1 family protein. In Bos taurus (Bovine), this protein is Tubulointerstitial nephritis antigen (TINAG).